A 273-amino-acid chain; its full sequence is Probable ribosomal RNA small subunit methyltransferase A (273 aa).

The S-adenosyl-L-methionine site is built by asparagine 23, leucine 25, glycine 50, glutamate 71, aspartate 95, and asparagine 110.

The protein belongs to the class I-like SAM-binding methyltransferase superfamily. rRNA adenine N(6)-methyltransferase family. RsmA subfamily.

It is found in the cytoplasm. Its function is as follows. Specifically dimethylates two adjacent adenosines in the loop of a conserved hairpin near the 3'-end of 16S rRNA in the 30S particle. May play a critical role in biogenesis of 30S subunits. The chain is Probable ribosomal RNA small subunit methyltransferase A from Thermococcus sibiricus (strain DSM 12597 / MM 739).